Reading from the N-terminus, the 323-residue chain is o-succinylbenzoate synthase (323 aa).

K134 (proton donor) is an active-site residue. Mg(2+) is bound by residues D162, E191, and D214. K236 (proton acceptor) is an active-site residue.

It belongs to the mandelate racemase/muconate lactonizing enzyme family. MenC type 1 subfamily. The cofactor is a divalent metal cation.

The enzyme catalyses (1R,6R)-6-hydroxy-2-succinyl-cyclohexa-2,4-diene-1-carboxylate = 2-succinylbenzoate + H2O. Its pathway is quinol/quinone metabolism; 1,4-dihydroxy-2-naphthoate biosynthesis; 1,4-dihydroxy-2-naphthoate from chorismate: step 4/7. The protein operates within quinol/quinone metabolism; menaquinone biosynthesis. In terms of biological role, converts 2-succinyl-6-hydroxy-2,4-cyclohexadiene-1-carboxylate (SHCHC) to 2-succinylbenzoate (OSB). The protein is o-succinylbenzoate synthase of Yersinia enterocolitica serotype O:8 / biotype 1B (strain NCTC 13174 / 8081).